The sequence spans 247 residues: Segregation and condensation protein A (247 aa).

This sequence belongs to the ScpA family. In terms of assembly, component of a cohesin-like complex composed of ScpA, ScpB and the Smc homodimer, in which ScpA and ScpB bind to the head domain of Smc. The presence of the three proteins is required for the association of the complex with DNA.

Its subcellular location is the cytoplasm. Its function is as follows. Participates in chromosomal partition during cell division. May act via the formation of a condensin-like complex containing Smc and ScpB that pull DNA away from mid-cell into both cell halves. This Mycoplasma mobile (strain ATCC 43663 / 163K / NCTC 11711) (Mesomycoplasma mobile) protein is Segregation and condensation protein A.